The chain runs to 233 residues: Fibroblast growth factor 8 (233 aa).

The first 22 residues, 1–22 (MGSPRSALSCLLLHLLVLCLQA), serve as a signal peptide directing secretion. N-linked (GlcNAc...) asparagine glycosylation occurs at Asn155.

It belongs to the heparin-binding growth factors family. Monomer. Homodimer. Interacts with FGFR1, FGFR2, FGFR3 and FGFR4. Affinity between fibroblast growth factors (FGFs) and their receptors is increased by heparan sulfate glycosaminoglycans that function as coreceptors.

It is found in the secreted. Plays an important role in the regulation of embryonic development, cell proliferation, cell differentiation and cell migration. Required for normal brain, eye, ear and limb development during embryogenesis. Required for normal development of the gonadotropin-releasing hormone (GnRH) neuronal system. Plays a role in neurite outgrowth in hippocampal cells. The chain is Fibroblast growth factor 8 (FGF8) from Homo sapiens (Human).